The primary structure comprises 46 residues: PhoP/PhoQ regulator MgrB (46 aa).

A helical membrane pass occupies residues 6–26; sequence WVALVVVVLACLLLWAQVFNM.

Belongs to the MgrB family. May form homooligomers. Probably interacts with the periplasmic domain of PhoQ.

The protein localises to the cell inner membrane. In terms of biological role, phoP-regulated transcription is redox-sensitive, being activated when the periplasm becomes more reducing. MgrB acts between DsbA/DsbB and PhoP/PhoQ in this pathway. Represses PhoP/PhoQ signaling, possibly by binding to the periplasmic domain of PhoQ, altering its activity and that of downstream effector PhoP. The sequence is that of PhoP/PhoQ regulator MgrB from Escherichia coli O6:K15:H31 (strain 536 / UPEC).